The primary structure comprises 283 residues: ATP phosphoribosyltransferase (283 aa).

Belongs to the ATP phosphoribosyltransferase family. Long subfamily. Mg(2+) serves as cofactor.

The protein resides in the cytoplasm. The enzyme catalyses 1-(5-phospho-beta-D-ribosyl)-ATP + diphosphate = 5-phospho-alpha-D-ribose 1-diphosphate + ATP. The protein operates within amino-acid biosynthesis; L-histidine biosynthesis; L-histidine from 5-phospho-alpha-D-ribose 1-diphosphate: step 1/9. With respect to regulation, feedback inhibited by histidine. Catalyzes the condensation of ATP and 5-phosphoribose 1-diphosphate to form N'-(5'-phosphoribosyl)-ATP (PR-ATP). Has a crucial role in the pathway because the rate of histidine biosynthesis seems to be controlled primarily by regulation of HisG enzymatic activity. The polypeptide is ATP phosphoribosyltransferase (Salinibacter ruber (strain DSM 13855 / M31)).